The primary structure comprises 716 residues: Polyribonucleotide nucleotidyltransferase (716 aa).

Mg(2+) is bound by residues D493 and D499. The KH domain occupies 560–619; the sequence is PRMITIKINPEKIRDVIGKGGSVIRALTEETGTTIDISDDGVVTIASTSSEGMAEAKKRI. Positions 629–697 constitute an S1 motif domain; that stretch reads GQVYEGTVLK…EKGRVRLSAK (69 aa).

Belongs to the polyribonucleotide nucleotidyltransferase family. It depends on Mg(2+) as a cofactor.

It localises to the cytoplasm. The catalysed reaction is RNA(n+1) + phosphate = RNA(n) + a ribonucleoside 5'-diphosphate. Functionally, involved in mRNA degradation. Catalyzes the phosphorolysis of single-stranded polyribonucleotides processively in the 3'- to 5'-direction. This Paraburkholderia xenovorans (strain LB400) protein is Polyribonucleotide nucleotidyltransferase.